The primary structure comprises 267 residues: Type II pantothenate kinase (267 aa).

Residue Asp6–Lys13 participates in ATP binding. Residue Glu70 is the Proton acceptor of the active site. ATP-binding positions include Thr99, Gly121–Gln125, Tyr137, and Ser225.

The protein belongs to the type II pantothenate kinase family. As to quaternary structure, homodimer.

It localises to the cytoplasm. It catalyses the reaction (R)-pantothenate + ATP = (R)-4'-phosphopantothenate + ADP + H(+). The protein operates within cofactor biosynthesis; coenzyme A biosynthesis; CoA from (R)-pantothenate: step 1/5. Functionally, catalyzes the phosphorylation of pantothenate (Pan), the first step in CoA biosynthesis. In Staphylococcus aureus (strain USA300), this protein is Type II pantothenate kinase.